We begin with the raw amino-acid sequence, 455 residues long: Maintenance of telomere capping protein 1 (455 aa).

2 disordered regions span residues 1–113 and 296–317; these read MAET…SATP and AKKM…EDAS. A compositionally biased stretch (basic and acidic residues) spans 27-38; the sequence is PTSKEFNNDDSK. The span at 80–113 shows a compositional bias: polar residues; it reads VAATSNERQQHDASNQPSQAAQTTINKNTESATP. Basic and acidic residues predominate over residues 296 to 305; sequence AKKMNKENKQ.

Belongs to the MTC1 family.

The protein localises to the cytoplasm. Functionally, involved in telomere capping. In Schizosaccharomyces pombe (strain 972 / ATCC 24843) (Fission yeast), this protein is Maintenance of telomere capping protein 1.